Here is a 123-residue protein sequence, read N- to C-terminus: Small ribosomal subunit protein uS12 (123 aa).

Positions 1–21 (MPTIEQLVRKGRQAKPKKSKT) are disordered. The segment covering 9-20 (RKGRQAKPKKSK) has biased composition (basic residues).

The protein belongs to the universal ribosomal protein uS12 family. In terms of assembly, part of the 30S ribosomal subunit. Contacts proteins S8 and S17. May interact with IF1 in the 30S initiation complex.

With S4 and S5 plays an important role in translational accuracy. Functionally, interacts with and stabilizes bases of the 16S rRNA that are involved in tRNA selection in the A site and with the mRNA backbone. Located at the interface of the 30S and 50S subunits, it traverses the body of the 30S subunit contacting proteins on the other side and probably holding the rRNA structure together. The combined cluster of proteins S8, S12 and S17 appears to hold together the shoulder and platform of the 30S subunit. In Bifidobacterium longum (strain NCC 2705), this protein is Small ribosomal subunit protein uS12.